Consider the following 206-residue polypeptide: Small ribosomal subunit protein uS4 (206 aa).

The S4 RNA-binding domain maps to 96 to 168; the sequence is SRLDNVVYRM…LELAEQREKP (73 aa).

It belongs to the universal ribosomal protein uS4 family. In terms of assembly, part of the 30S ribosomal subunit. Contacts protein S5. The interaction surface between S4 and S5 is involved in control of translational fidelity.

Its function is as follows. One of the primary rRNA binding proteins, it binds directly to 16S rRNA where it nucleates assembly of the body of the 30S subunit. With S5 and S12 plays an important role in translational accuracy. This chain is Small ribosomal subunit protein uS4, found in Baumannia cicadellinicola subsp. Homalodisca coagulata.